Consider the following 120-residue polypeptide: MNPSEIKKLRTESILKELIPEALANLDDENLKNLCVVDVECKKGRYDAFVYLDKMFFNVHEQEKILSSLKKASRALQNYCMSEQGWYRCPNFHFKFDDRLEYQNHMDALFEKIKKDKNES.

Belongs to the RbfA family. Monomer. Binds 30S ribosomal subunits, but not 50S ribosomal subunits or 70S ribosomes.

It localises to the cytoplasm. Its function is as follows. One of several proteins that assist in the late maturation steps of the functional core of the 30S ribosomal subunit. Associates with free 30S ribosomal subunits (but not with 30S subunits that are part of 70S ribosomes or polysomes). Required for efficient processing of 16S rRNA. May interact with the 5'-terminal helix region of 16S rRNA. The sequence is that of Ribosome-binding factor A from Campylobacter jejuni subsp. jejuni serotype O:6 (strain 81116 / NCTC 11828).